The following is a 349-amino-acid chain: Shematrin-like protein 1 (349 aa).

The N-terminal stretch at Met1 to Ala16 is a signal peptide.

Prismatic layer of shell (at protein level).

The protein resides in the secreted. This chain is Shematrin-like protein 1, found in Margaritifera margaritifera (Freshwater pearl mussel).